The primary structure comprises 360 residues: Serine/threonine-protein phosphatase 2A activator 2 (360 aa).

It belongs to the PTPA-type PPIase family.

Its subcellular location is the cytoplasm. The enzyme catalyses [protein]-peptidylproline (omega=180) = [protein]-peptidylproline (omega=0). In terms of biological role, PPIases accelerate the folding of proteins. It catalyzes the cis-trans isomerization of proline imidic peptide bonds in oligopeptides. Acts as a regulatory subunit for PP2A-like phosphatases modulating their activity or substrate specificity, probably by inducing a conformational change in the catalytic subunit, a direct target of the PPIase. Can reactivate inactive phosphatase PP2A-phosphatase methylesterase complexes (PP2Ai) in presence of ATP and Mg(2+) by dissociating the inactive form from the complex. This Kluyveromyces lactis (strain ATCC 8585 / CBS 2359 / DSM 70799 / NBRC 1267 / NRRL Y-1140 / WM37) (Yeast) protein is Serine/threonine-protein phosphatase 2A activator 2 (RRD2).